Consider the following 209-residue polypeptide: Large ribosomal subunit protein uL4 (209 aa).

It belongs to the universal ribosomal protein uL4 family. Part of the 50S ribosomal subunit.

Functionally, one of the primary rRNA binding proteins, this protein initially binds near the 5'-end of the 23S rRNA. It is important during the early stages of 50S assembly. It makes multiple contacts with different domains of the 23S rRNA in the assembled 50S subunit and ribosome. Its function is as follows. Forms part of the polypeptide exit tunnel. The chain is Large ribosomal subunit protein uL4 from Borrelia duttonii (strain Ly).